The chain runs to 227 residues: Transcriptional regulatory protein TdiR (227 aa).

The region spanning 11–125 (TVFVVDDEAS…DLLDAVNAAL (115 aa)) is the Response regulatory domain. At D60 the chain carries 4-aspartylphosphate. The HTH luxR-type domain occupies 141–206 (HLDLLATLSQ…DLMHFVMRGS (66 aa)). Positions 165 to 184 (SKEIAKLLGISYKTVEAHRG) form a DNA-binding region, H-T-H motif.

In terms of processing, phosphorylated by TdiS.

In terms of biological role, member of the two-component regulatory system TdiR/TdiS, which probably regulates transcription of toluene catabolic genes (bss operon). Binds to DNA. The sequence is that of Transcriptional regulatory protein TdiR (tdiR) from Thauera aromatica.